Here is a 674-residue protein sequence, read N- to C-terminus: 1,4-alpha-glucan branching enzyme GlgB 1 (674 aa).

The active-site Nucleophile is Asp336. Catalysis depends on Glu389, which acts as the Proton donor.

The protein belongs to the glycosyl hydrolase 13 family. GlgB subfamily. Monomer.

It carries out the reaction Transfers a segment of a (1-&gt;4)-alpha-D-glucan chain to a primary hydroxy group in a similar glucan chain.. Its pathway is glycan biosynthesis; glycogen biosynthesis. In terms of biological role, catalyzes the formation of the alpha-1,6-glucosidic linkages in glycogen by scission of a 1,4-alpha-linked oligosaccharide from growing alpha-1,4-glucan chains and the subsequent attachment of the oligosaccharide to the alpha-1,6 position. In Clostridium perfringens (strain 13 / Type A), this protein is 1,4-alpha-glucan branching enzyme GlgB 1 (glgB1).